The chain runs to 261 residues: UPF0177 protein YvdC (261 aa).

Transmembrane regions (helical) follow at residues 15–35 (WVIV…IFHL), 43–63 (VLSI…VLFI), 84–104 (LDTV…YLIA), 123–143 (IIIG…FAQI), 197–217 (YFAF…TDLY), and 239–259 (FYLN…IALV).

This sequence belongs to the UPF0177 family.

It is found in the cell membrane. This Lactococcus lactis subsp. lactis (strain IL1403) (Streptococcus lactis) protein is UPF0177 protein YvdC (yvdC).